The chain runs to 833 residues: Kinesin-like protein KIFC3 (833 aa).

A disordered region spans residues 19-74 (LWRVGRAPEPEPGMARPAPAPASPAARPFPHTGPGRLRTGRGKDTPVCGDEDSSAR). A compositionally biased stretch (low complexity) spans 30 to 48 (PGMARPAPAPASPAARPFP). Coiled coils occupy residues 102–362 (LTLQ…ENLA) and 395–432 (LLQE…LQLR). The region spanning 445-768 (NIRVIARVRP…LKFAERVRSV (324 aa)) is the Kinesin motor domain. Residue 528-535 (GQTGAGKT) participates in ATP binding. Positions 786 to 833 (EHLEWEPACQTPQPSARAHSAPSSGTSSRPGSIRRKLQPSGKSRPLPV) are disordered. A compositionally biased stretch (polar residues) spans 806 to 815 (APSSGTSSRP). 2 positions are modified to phosphoserine: Ser-813 and Ser-817.

This sequence belongs to the TRAFAC class myosin-kinesin ATPase superfamily. Kinesin family.

Its subcellular location is the cell junction. The protein localises to the adherens junction. It is found in the cytoplasm. The protein resides in the cytoskeleton. It localises to the microtubule organizing center. Its subcellular location is the centrosome. The protein localises to the cytoplasmic vesicle membrane. Functionally, minus-end microtubule-dependent motor protein. Involved in apically targeted transport. Required for zonula adherens maintenance. The sequence is that of Kinesin-like protein KIFC3 (KIFC3) from Homo sapiens (Human).